We begin with the raw amino-acid sequence, 196 residues long: UMP-CMP kinase (196 aa).

13 to 18 contacts ATP; that stretch reads GAGKGT. Positions 33–63 are NMP; sequence SAGDLLREERSRTDSEFGQLIDSYIKEGKIV. A ribonucleoside 5'-phosphate contacts are provided by residues arginine 39, 61-63, and 93-96; these read KIV and GFPR. A CMP-binding site is contributed by asparagine 100. The segment at 133–143 is LID; that stretch reads ERGKSSGRTDD. Arginine 134 is an ATP binding site. A ribonucleoside 5'-phosphate-binding residues include arginine 140 and arginine 151. Residue arginine 179 participates in ATP binding.

It belongs to the adenylate kinase family. UMP-CMP kinase subfamily. As to quaternary structure, monomer. Mg(2+) is required as a cofactor.

It localises to the nucleus. It is found in the cytoplasm. The enzyme catalyses CMP + ATP = CDP + ADP. The catalysed reaction is dCMP + ATP = dCDP + ADP. It catalyses the reaction UMP + ATP = UDP + ADP. It carries out the reaction a 2'-deoxyribonucleoside 5'-diphosphate + ATP = a 2'-deoxyribonucleoside 5'-triphosphate + ADP. The enzyme catalyses a ribonucleoside 5'-diphosphate + ATP = a ribonucleoside 5'-triphosphate + ADP. Functionally, catalyzes the phosphorylation of pyrimidine nucleoside monophosphates at the expense of ATP. Plays an important role in de novo pyrimidine nucleotide biosynthesis. Has preference for UMP and CMP as phosphate acceptors. Also displays broad nucleoside diphosphate kinase activity. The protein is UMP-CMP kinase (cmpk) of Danio rerio (Zebrafish).